The primary structure comprises 142 residues: Large ribosomal subunit protein uL13 (142 aa).

This sequence belongs to the universal ribosomal protein uL13 family. In terms of assembly, part of the 50S ribosomal subunit.

In terms of biological role, this protein is one of the early assembly proteins of the 50S ribosomal subunit, although it is not seen to bind rRNA by itself. It is important during the early stages of 50S assembly. The chain is Large ribosomal subunit protein uL13 from Agathobacter rectalis (strain ATCC 33656 / DSM 3377 / JCM 17463 / KCTC 5835 / VPI 0990) (Eubacterium rectale).